Reading from the N-terminus, the 118-residue chain is BLOC-1-related complex subunit 8 (118 aa).

Positions 98–107 are enriched in polar residues; that stretch reads KEQISNSQGR. Positions 98 to 118 are disordered; it reads KEQISNSQGRSPHVSAPSASS.

Belongs to the BORCS8 family.

Its subcellular location is the lysosome membrane. Functionally, as part of a BORC-like complex, it may play a role in the movement and localization of lysosomes at the cell periphery. Associated with the cytosolic face of lysosomes, this complex may couple lysosomes to microtubule plus-end-directed kinesin motors, driving lysosome movement toward the cell periphery. This chain is BLOC-1-related complex subunit 8, found in Tetraodon nigroviridis (Spotted green pufferfish).